The primary structure comprises 660 residues: Acetyl-coenzyme A synthetase (660 aa).

CoA-binding positions include 197–200 (RGGK) and Thr-317. ATP is bound by residues 397 to 399 (GEP), 421 to 426 (DTWWQT), Asp-512, and Arg-528. Position 536 (Ser-536) interacts with CoA. Arg-539 provides a ligand contact to ATP. Mg(2+)-binding residues include Val-550, His-552, and Val-555. The residue at position 625 (Lys-625) is an N6-acetyllysine.

Belongs to the ATP-dependent AMP-binding enzyme family. Requires Mg(2+) as cofactor. Post-translationally, acetylated. Deacetylation by the SIR2-homolog deacetylase activates the enzyme.

The catalysed reaction is acetate + ATP + CoA = acetyl-CoA + AMP + diphosphate. In terms of biological role, catalyzes the conversion of acetate into acetyl-CoA (AcCoA), an essential intermediate at the junction of anabolic and catabolic pathways. AcsA undergoes a two-step reaction. In the first half reaction, AcsA combines acetate with ATP to form acetyl-adenylate (AcAMP) intermediate. In the second half reaction, it can then transfer the acetyl group from AcAMP to the sulfhydryl group of CoA, forming the product AcCoA. The protein is Acetyl-coenzyme A synthetase of Burkholderia thailandensis (strain ATCC 700388 / DSM 13276 / CCUG 48851 / CIP 106301 / E264).